An 87-amino-acid polypeptide reads, in one-letter code: Glutaredoxin (87 aa).

The Glutaredoxin domain occupies Met1–Asp87. Cys11 and Cys14 are disulfide-bonded.

Belongs to the glutaredoxin family. Monomer.

It is found in the cytoplasm. Its function is as follows. Has a glutathione-disulfide oxidoreductase activity in the presence of NADPH and glutathione reductase. Reduces low molecular weight disulfides and proteins. The polypeptide is Glutaredoxin (grx) (Vibrio cholerae serotype O1 (strain ATCC 39315 / El Tor Inaba N16961)).